The primary structure comprises 878 residues: Alanine--tRNA ligase (878 aa).

His567, His571, Cys669, and His673 together coordinate Zn(2+).

This sequence belongs to the class-II aminoacyl-tRNA synthetase family. Zn(2+) serves as cofactor.

The protein localises to the cytoplasm. The enzyme catalyses tRNA(Ala) + L-alanine + ATP = L-alanyl-tRNA(Ala) + AMP + diphosphate. Catalyzes the attachment of alanine to tRNA(Ala) in a two-step reaction: alanine is first activated by ATP to form Ala-AMP and then transferred to the acceptor end of tRNA(Ala). Also edits incorrectly charged Ser-tRNA(Ala) and Gly-tRNA(Ala) via its editing domain. The chain is Alanine--tRNA ligase from Rickettsia massiliae (strain Mtu5).